A 440-amino-acid chain; its full sequence is MTLNEKKSINECDLKGKKVLIRVDFNVPVKNGKITNDYRIRSALPTLKKVLTEGGSCVLMSHLGRPKGIPMAQAGKIRSTGGVPGFQQKATLKPVAKALSELLLRPVTFAPDCLNAADVVSKMSPGDVVLLENVRFYKEEGSKKAKDREAMAKILASYGDVYISDAFGTAHRDSATMTGIPKILGNGAAGYLMEKEISYFAKVLGNPPRPLVAIVGGAKVSDKIQLLDNMLQRIDYLLIGGAMAYTFLKAQGYSIGKSKCEESKLEFARSLLKKAEDRKVQVILPIDHVCHTEFKAVDSPLITEDQNIPEGHMALDIGPKTIEKYVQTIGKCKSAIWNGPMGVFEMVPYSKGTFAIAKAMGRGTHEHGLMSIIGGGDSASAAELSGEAKRMSHVSTGGGASLELLEGKTLPGVTVLDEKSAVVSYASAGTGTLSNRWSSL.

Positions 23, 24, 25, 26, 39, 61, 62, 64, 65, 135, 171, and 172 each coordinate (2R)-3-phosphoglycerate. CDP is bound at residue Gly217. Residue Ala218 participates in ADP binding. Ala218 and Lys219 together coordinate AMP. Ala218 serves as a coordination point for ATP. A Mg(2+)-binding site is contributed by Ala218. Lys219 lines the (2R)-3-phosphoglycerate pocket. Asp222 serves as a coordination point for CDP. Mg(2+) is bound at residue Asp222. Lys223 and Gly241 together coordinate ADP. Lys223 serves as a coordination point for AMP. Residue Gly241 coordinates CDP. Ala242 and Ala314 together coordinate AMP. Residues Ala242 and Ala314 each coordinate ATP. ADP is bound by residues Ala314 and Asn338. 2 residues coordinate CDP: Gly339 and Phe344. 4 residues coordinate ADP: Phe344, Glu345, Asp377, and Ser378. Position 345 (Glu345) interacts with AMP. ATP-binding residues include Asp377 and Ser378. Asp377 contributes to the Mg(2+) binding site.

The protein belongs to the phosphoglycerate kinase family. In terms of assembly, monomer. It depends on Mg(2+) as a cofactor.

The protein resides in the glycosome. It catalyses the reaction (2R)-3-phosphoglycerate + ATP = (2R)-3-phospho-glyceroyl phosphate + ADP. The protein operates within carbohydrate degradation; glycolysis; pyruvate from D-glyceraldehyde 3-phosphate: step 2/5. This chain is Phosphoglycerate kinase, glycosomal, found in Trypanosoma brucei brucei.